Here is a 194-residue protein sequence, read N- to C-terminus: Peptidyl-tRNA hydrolase (194 aa).

Tyr-17 lines the tRNA pocket. The active-site Proton acceptor is His-22. TRNA is bound by residues Phe-68, Asn-70, and Asn-116.

This sequence belongs to the PTH family. Monomer.

Its subcellular location is the cytoplasm. It carries out the reaction an N-acyl-L-alpha-aminoacyl-tRNA + H2O = an N-acyl-L-amino acid + a tRNA + H(+). Functionally, hydrolyzes ribosome-free peptidyl-tRNAs (with 1 or more amino acids incorporated), which drop off the ribosome during protein synthesis, or as a result of ribosome stalling. Catalyzes the release of premature peptidyl moieties from peptidyl-tRNA molecules trapped in stalled 50S ribosomal subunits, and thus maintains levels of free tRNAs and 50S ribosomes. This Haemophilus influenzae (strain PittGG) protein is Peptidyl-tRNA hydrolase.